The following is a 214-amino-acid chain: Ubiquitin-conjugating enzyme E2 21 (214 aa).

The UBC core domain occupies 21-168 (ARVTRKCKEV…AVYWTSYFAN (148 aa)). Residue cysteine 106 is the Glycyl thioester intermediate of the active site. Positions 172-214 (DVEPDFNRKVGRLIEMGIRETEAIVYLSCNNWKLEQALQFIFD) constitute a UBA domain.

Belongs to the ubiquitin-conjugating enzyme family.

It carries out the reaction S-ubiquitinyl-[E1 ubiquitin-activating enzyme]-L-cysteine + [E2 ubiquitin-conjugating enzyme]-L-cysteine = [E1 ubiquitin-activating enzyme]-L-cysteine + S-ubiquitinyl-[E2 ubiquitin-conjugating enzyme]-L-cysteine.. Its pathway is protein modification; protein ubiquitination. Its function is as follows. Acts with E3 ubiquitin-protein ligase trim-21 to catalyze the 'Lys-48'-linked polyubiquitination of ced-1, promoting its proteasomal degradation to maintain appropriate ced-1 levels for apoptotic cell clearance. This is Ubiquitin-conjugating enzyme E2 21 (ubc-21) from Caenorhabditis elegans.